The primary structure comprises 415 residues: Transposase for insertion sequence element IS1081 (415 aa).

This sequence belongs to the transposase mutator family.

Required for the transposition of the insertion element. In Mycobacterium bovis (strain ATCC BAA-935 / AF2122/97), this protein is Transposase for insertion sequence element IS1081.